The following is a 142-amino-acid chain: MKTFTATPETVTRDWFVVDADGKTLGRIATEIATRLRGKHKPEYTPHVDTGDYIIVVNAEKVTVTGNKAKGKTYYSHSGFPGGIKQISFEKLQAQKPEMIIEKAVKGMLPKGPLGRAMFRKLKVYAGAEHNHTAQQPQVLDI.

Belongs to the universal ribosomal protein uL13 family. As to quaternary structure, part of the 50S ribosomal subunit.

Its function is as follows. This protein is one of the early assembly proteins of the 50S ribosomal subunit, although it is not seen to bind rRNA by itself. It is important during the early stages of 50S assembly. This Shewanella baltica (strain OS223) protein is Large ribosomal subunit protein uL13.